Here is a 361-residue protein sequence, read N- to C-terminus: Probable lipid desaturase ADS3.2, chloroplastic (361 aa).

Residues 1–57 (MMSLSTTLKPLSHFSPFVKRHNPKTNNTLFTLDTHNFTNSFWSKRGGSVSHRKHTVV) constitute a chloroplast transit peptide. 2 helical membrane passes run 99–118 (LVIF…YFSW) and 122–139 (WVFP…TLSY). The Histidine box-1 signature appears at 140 to 145 (HRNLSH). Residues 177–181 (HRYHH) carry the Histidine box-2 motif. A helical transmembrane segment spans residues 246-266 (FLFYFCGGMPLLVWGIGITIA). The Histidine box-3 signature appears at 309–313 (HNNHH).

The protein belongs to the fatty acid desaturase type 1 family. Fe(2+) is required as a cofactor.

Its subcellular location is the plastid. The protein resides in the chloroplast membrane. The protein operates within lipid metabolism; polyunsaturated fatty acid biosynthesis. The chain is Probable lipid desaturase ADS3.2, chloroplastic from Arabidopsis thaliana (Mouse-ear cress).